Here is a 216-residue protein sequence, read N- to C-terminus: Large ribosomal subunit protein uL3 (216 aa).

Residues glycine 136 to lysine 155 form a disordered region. Glutamine 151 is modified (N5-methylglutamine).

The protein belongs to the universal ribosomal protein uL3 family. Part of the 50S ribosomal subunit. Forms a cluster with proteins L14 and L19. Post-translationally, methylated by PrmB.

Its function is as follows. One of the primary rRNA binding proteins, it binds directly near the 3'-end of the 23S rRNA, where it nucleates assembly of the 50S subunit. In Rickettsia prowazekii (strain Madrid E), this protein is Large ribosomal subunit protein uL3.